Reading from the N-terminus, the 405-residue chain is Calsequestrin-1 (405 aa).

The signal sequence occupies residues 1–34 (MRATDRMGARAVSELRLALLFVLVLGTPRLGVQG). A Phosphotyrosine modification is found at Y43. S81 carries the post-translational modification Phosphoserine. The residue at position 124 (T124) is a Phosphothreonine. S216 carries the phosphoserine modification. A glycan (N-linked (GlcNAc...) asparagine) is linked at N350. Residues 382 to 405 (EGEINTEDDDDDDDDDDDDDDDDD) are disordered.

Belongs to the calsequestrin family. As to quaternary structure, monomer; increases in response to a depletion of intracellular calcium. Homodimer. Homotetramer and homopolymer. Can form linear homooligomers. Ca(2+) ions promote oligomerization. Interacts (via C-terminal end and preferentially with the monomeric form) with STIM1; this interaction increases in response to a depletion of intracellular calcium, decreases both STIM1 aggregation and clustering, interaction of STIM1 with ORAI1 and store-operated Ca(2+) entry (SOCE) activity. Interacts with ASPH and TRDN. In terms of processing, N-glycosylated. Detected in skeletal muscle (at protein level). Detected in skeletal muscle.

The protein localises to the endoplasmic reticulum. It is found in the sarcoplasmic reticulum. The protein resides in the sarcoplasmic reticulum lumen. It localises to the sarcoplasmic reticulum membrane. Its subcellular location is the mitochondrion matrix. In terms of biological role, calsequestrin is a high-capacity, moderate affinity, calcium-binding protein and thus acts as an internal calcium store in muscle. Calcium ions are bound by clusters of acidic residues at the protein surface, often at the interface between subunits. Can bind around 80 Ca(2+) ions. Regulates the release of lumenal Ca(2+) via the calcium release channel RYR1; this plays an important role in triggering muscle contraction. Negatively regulates store-operated Ca(2+) entry (SOCE) activity. The protein is Calsequestrin-1 (Casq1) of Mus musculus (Mouse).